The following is a 197-amino-acid chain: Protein shisa-4 (197 aa).

Residues 1-27 form the signal peptide; sequence MPPAGLRRAAPLTAIALLVLGAPLVLA. Over 28-87 the chain is Extracellular; sequence GEDCLWYLDRNGSWHPGFNCEFFTFCCGTCYHRYCCRDLTLLITERQQKHCLAFSPKTIA. Residues 88-108 form a helical membrane-spanning segment; it reads GIASAVILFVAVVATTICCFL. The Cytoplasmic segment spans residues 109–197; the sequence is CSCCYLYRRR…MPPQPSYPGA (89 aa).

It belongs to the shisa family.

Its subcellular location is the membrane. The sequence is that of Protein shisa-4 (SHISA4) from Homo sapiens (Human).